We begin with the raw amino-acid sequence, 297 residues long: Phosphatidylserine decarboxylase proenzyme (297 aa).

Active-site charge relay system; for autoendoproteolytic cleavage activity residues include Asp100, His157, and Ser263. Residue Ser263 is the Schiff-base intermediate with substrate; via pyruvic acid; for decarboxylase activity of the active site. At Ser263 the chain carries Pyruvic acid (Ser); by autocatalysis.

The protein belongs to the phosphatidylserine decarboxylase family. PSD-B subfamily. Prokaryotic type I sub-subfamily. As to quaternary structure, heterodimer of a large membrane-associated beta subunit and a small pyruvoyl-containing alpha subunit. Pyruvate is required as a cofactor. Post-translationally, is synthesized initially as an inactive proenzyme. Formation of the active enzyme involves a self-maturation process in which the active site pyruvoyl group is generated from an internal serine residue via an autocatalytic post-translational modification. Two non-identical subunits are generated from the proenzyme in this reaction, and the pyruvate is formed at the N-terminus of the alpha chain, which is derived from the carboxyl end of the proenzyme. The autoendoproteolytic cleavage occurs by a canonical serine protease mechanism, in which the side chain hydroxyl group of the serine supplies its oxygen atom to form the C-terminus of the beta chain, while the remainder of the serine residue undergoes an oxidative deamination to produce ammonia and the pyruvoyl prosthetic group on the alpha chain. During this reaction, the Ser that is part of the protease active site of the proenzyme becomes the pyruvoyl prosthetic group, which constitutes an essential element of the active site of the mature decarboxylase.

It is found in the cell membrane. It catalyses the reaction a 1,2-diacyl-sn-glycero-3-phospho-L-serine + H(+) = a 1,2-diacyl-sn-glycero-3-phosphoethanolamine + CO2. It participates in phospholipid metabolism; phosphatidylethanolamine biosynthesis; phosphatidylethanolamine from CDP-diacylglycerol: step 2/2. Catalyzes the formation of phosphatidylethanolamine (PtdEtn) from phosphatidylserine (PtdSer). This chain is Phosphatidylserine decarboxylase proenzyme, found in Haemophilus ducreyi (strain 35000HP / ATCC 700724).